Consider the following 105-residue polypeptide: Large ribosomal subunit protein bL21 (105 aa).

This sequence belongs to the bacterial ribosomal protein bL21 family. Part of the 50S ribosomal subunit. Contacts protein L20.

This protein binds to 23S rRNA in the presence of protein L20. This chain is Large ribosomal subunit protein bL21, found in Rickettsia canadensis (strain McKiel).